The primary structure comprises 249 residues: 1-(5-phosphoribosyl)-5-[(5-phosphoribosylamino)methylideneamino] imidazole-4-carboxamide isomerase (249 aa).

The active-site Proton acceptor is aspartate 8. The Proton donor role is filled by aspartate 129.

This sequence belongs to the HisA/HisF family.

The protein resides in the cytoplasm. The catalysed reaction is 1-(5-phospho-beta-D-ribosyl)-5-[(5-phospho-beta-D-ribosylamino)methylideneamino]imidazole-4-carboxamide = 5-[(5-phospho-1-deoxy-D-ribulos-1-ylimino)methylamino]-1-(5-phospho-beta-D-ribosyl)imidazole-4-carboxamide. Its pathway is amino-acid biosynthesis; L-histidine biosynthesis; L-histidine from 5-phospho-alpha-D-ribose 1-diphosphate: step 4/9. This is 1-(5-phosphoribosyl)-5-[(5-phosphoribosylamino)methylideneamino] imidazole-4-carboxamide isomerase from Rhizobium rhizogenes (strain K84 / ATCC BAA-868) (Agrobacterium radiobacter).